The chain runs to 417 residues: Phosphoglycerate kinase 1 (417 aa).

Ser-2 carries the post-translational modification N-acetylserine. Residues Ser-2 and Ser-4 each carry the phosphoserine modification. Residue Lys-6 is modified to N6-succinyllysine. Lys-11 carries the N6-acetyllysine modification. The (2R)-3-phosphoglycerate site is built by Val-23, Asp-24, Phe-25, Asn-26, Gln-38, and Arg-39. Residues 38–43 (QRIKAA) are mitochondrial targeting region exposed following cis-trans isomerization by PIN1 and recognized by the TOM complex for mitochondrial translocation of the protein. Position 48 is an N6-acetyllysine; alternate (Lys-48). Lys-48 bears the N6-succinyllysine; alternate mark. Residues Ser-62, His-63, Gly-65, and Arg-66 each coordinate (2R)-3-phosphoglycerate. Lys-75 bears the N6-acetyllysine mark. Tyr-76 bears the Phosphotyrosine mark. N6-acetyllysine is present on residues Lys-86 and Lys-91. Lys-97 carries the N6-acetyllysine; alternate modification. Lys-97 is modified (N6-(2-hydroxyisobutyryl)lysine; alternate). Leu-122 and Arg-123 together coordinate (2R)-3-phosphoglycerate. Lys-131 is subject to N6-acetyllysine; alternate. Lys-131 is subject to N6-malonyllysine; alternate. At Lys-146 the chain carries N6-acetyllysine. (2R)-3-phosphoglycerate-binding residues include His-170 and Arg-171. Residue Lys-191 is modified to N6-succinyllysine. At Tyr-196 the chain carries Phosphotyrosine. Position 199 is an N6-acetyllysine (Lys-199). Ser-203 carries the post-translational modification Phosphoserine. Gly-214 provides a ligand contact to ADP. Position 214 (Gly-214) interacts with CDP. 2 residues coordinate AMP: Ala-215 and Lys-216. ATP is bound at residue Ala-215. Ala-215 lines the Mg(2+) pocket. The residue at position 216 (Lys-216) is an N6-(2-hydroxyisobutyryl)lysine. Residues Ala-218 and Asp-219 each coordinate Mg(2+). Residue Asp-219 participates in CDP binding. Lys-220 serves as a coordination point for AMP. Lys-220 contributes to the ATP binding site. Position 220 is an N6-(2-hydroxyisobutyryl)lysine (Lys-220). Gly-238 contacts ADP. Gly-238 serves as a coordination point for CDP. Gly-239 contacts AMP. Gly-239 provides a ligand contact to ATP. 2 positions are modified to N6-acetyllysine: Lys-267 and Lys-291. Gly-313 contributes to the AMP binding site. Position 313 (Gly-313) interacts with ATP. Lys-323 is subject to N6-(2-hydroxyisobutyryl)lysine. CDP is bound by residues Gly-338, Val-340, and Phe-343. Phe-343 provides a ligand contact to ADP. Glu-344 is a binding site for AMP. Glu-344 is an ATP binding site. N6-acetyllysine is present on Lys-361. ATP contacts are provided by Asp-375 and Thr-376. A Mg(2+)-binding site is contributed by Asp-375.

The protein belongs to the phosphoglycerate kinase family. In terms of assembly, monomer. Interacts with kinase MAPK1/ERK2; the interaction is direct, occurs under hypoxic conditions, and promotes its interaction with PIN1. Interacts with peptidyl-prolyl cis-trans isomerase PIN1; the interaction is direct, occurs under hypoxic conditions, and targets the protein to the mitochondrion by promoting interactions with the TOM complex. Interacts with mitochondrial circRNA mcPGK1 (via its 2nd stem-loop); the interaction is direct and targets the protein to the mitochondrion by promoting interactions with the TOM complex. Interacts with pyruvate dehydrogenase kinase PDK1; the interaction is direct, occurs under hypoxic conditions and leads to PDK1-mediated inhibition of pyruvate dehydrogenase complex activity. It depends on Mg(2+) as a cofactor. Post-translationally, phosphorylated at Ser-203 by MAPK1/ERK2 under hypoxic conditions, which promotes its mitochondrial targeting.

The protein resides in the cytoplasm. The protein localises to the cytosol. Its subcellular location is the mitochondrion matrix. It catalyses the reaction (2R)-3-phosphoglycerate + ATP = (2R)-3-phospho-glyceroyl phosphate + ADP. The catalysed reaction is L-seryl-[protein] + ATP = O-phospho-L-seryl-[protein] + ADP + H(+). Its pathway is carbohydrate degradation; glycolysis; pyruvate from D-glyceraldehyde 3-phosphate: step 2/5. Catalyzes one of the two ATP producing reactions in the glycolytic pathway via the reversible conversion of 1,3-diphosphoglycerate to 3-phosphoglycerate. Both L- and D- forms of purine and pyrimidine nucleotides can be used as substrates, but the activity is much lower on pyrimidines. In addition to its role as a glycolytic enzyme, it seems that PGK-1 acts as a polymerase alpha cofactor protein (primer recognition protein). Acts as a protein kinase when localized to the mitochondrion where it phosphorylates pyruvate dehydrogenase kinase PDK1 to inhibit pyruvate dehydrogenase complex activity and suppress the formation of acetyl-coenzyme A from pyruvate, and consequently inhibit oxidative phosphorylation and promote glycolysis. May play a role in sperm motility. This chain is Phosphoglycerate kinase 1 (PGK1), found in Sus scrofa (Pig).